The sequence spans 181 residues: RNA pyrophosphohydrolase (181 aa).

The Nudix hydrolase domain occupies 6-148; that stretch reads GFRPNVGIIV…KRQVYRQALQ (143 aa). Positions 38–59 match the Nudix box motif; sequence GGVEANETPLEALYRELREEVG.

Belongs to the Nudix hydrolase family. RppH subfamily. A divalent metal cation serves as cofactor.

Functionally, accelerates the degradation of transcripts by removing pyrophosphate from the 5'-end of triphosphorylated RNA, leading to a more labile monophosphorylated state that can stimulate subsequent ribonuclease cleavage. This chain is RNA pyrophosphohydrolase, found in Halorhodospira halophila (strain DSM 244 / SL1) (Ectothiorhodospira halophila (strain DSM 244 / SL1)).